The sequence spans 459 residues: Cyclic GMP-AMP synthase-like receptor 2 (459 aa).

Residues S68 and 79–81 (EFD) contribute to the ATP site. Residues E79, D81, and D199 each contribute to the Mg(2+) site. GTP contacts are provided by residues D199 and 248–255 (RSSFYAVE). 252-255 (YAVE) contributes to the ATP binding site. Residue H263 coordinates Zn(2+). Residues K274 and 288-292 (SYYIK) contribute to the ATP site.

It belongs to the mab-21 family. It depends on Mg(2+) as a cofactor. Mn(2+) serves as cofactor.

It catalyses the reaction GTP + ATP = 3',2'-cGAMP + 2 diphosphate. The enzyme catalyses GTP + ATP = 2',3'-cGAMP + 2 diphosphate. It carries out the reaction GTP + ATP = pppGp(2'-5')A + diphosphate. The catalysed reaction is pppA(2'-5')pG = 3',2'-cGAMP + diphosphate. It catalyses the reaction pppGp(2'-5')A = 2',3'-cGAMP + diphosphate. The enzyme activity is specifically activated by some nucleic acid. Its function is as follows. Nucleotidyltransferase that catalyzes the formation of cyclic GMP-AMP from ATP and GTP and plays a key role in antiviral innate immunity. Directly binds some unknown nucleic acid, activating the nucleotidyltransferase activity, leading to synthesis of both 3',2'-cGAMP and 2',3'-cGAMP second messengers. 3',2'-cGAMP and 2',3'-cGAMP bind to and activate Sting, thereby triggering the antiviral immune response via activation of the NF-kappa-B transcription factor Rel (Relish). This chain is Cyclic GMP-AMP synthase-like receptor 2, found in Drosophila melanogaster (Fruit fly).